A 121-amino-acid chain; its full sequence is Ribonuclease P protein component (121 aa).

The protein belongs to the RnpA family. As to quaternary structure, consists of a catalytic RNA component (M1 or rnpB) and a protein subunit.

It catalyses the reaction Endonucleolytic cleavage of RNA, removing 5'-extranucleotides from tRNA precursor.. In terms of biological role, RNaseP catalyzes the removal of the 5'-leader sequence from pre-tRNA to produce the mature 5'-terminus. It can also cleave other RNA substrates such as 4.5S RNA. The protein component plays an auxiliary but essential role in vivo by binding to the 5'-leader sequence and broadening the substrate specificity of the ribozyme. In Rickettsia prowazekii (strain Madrid E), this protein is Ribonuclease P protein component.